We begin with the raw amino-acid sequence, 450 residues long: Phosphoglucosamine mutase (450 aa).

The active-site Phosphoserine intermediate is the serine 101. Mg(2+) contacts are provided by serine 101, aspartate 240, aspartate 242, and aspartate 244. Serine 101 carries the post-translational modification Phosphoserine.

It belongs to the phosphohexose mutase family. Mg(2+) serves as cofactor. In terms of processing, activated by phosphorylation.

It catalyses the reaction alpha-D-glucosamine 1-phosphate = D-glucosamine 6-phosphate. Catalyzes the conversion of glucosamine-6-phosphate to glucosamine-1-phosphate. The sequence is that of Phosphoglucosamine mutase from Streptococcus equi subsp. equi (strain 4047).